The sequence spans 262 residues: Acyl-[acyl-carrier-protein]--UDP-N-acetylglucosamine O-acyltransferase (262 aa).

This sequence belongs to the transferase hexapeptide repeat family. LpxA subfamily. In terms of assembly, homotrimer.

It is found in the cytoplasm. The catalysed reaction is a (3R)-hydroxyacyl-[ACP] + UDP-N-acetyl-alpha-D-glucosamine = a UDP-3-O-[(3R)-3-hydroxyacyl]-N-acetyl-alpha-D-glucosamine + holo-[ACP]. It functions in the pathway glycolipid biosynthesis; lipid IV(A) biosynthesis; lipid IV(A) from (3R)-3-hydroxytetradecanoyl-[acyl-carrier-protein] and UDP-N-acetyl-alpha-D-glucosamine: step 1/6. Functionally, involved in the biosynthesis of lipid A, a phosphorylated glycolipid that anchors the lipopolysaccharide to the outer membrane of the cell. This chain is Acyl-[acyl-carrier-protein]--UDP-N-acetylglucosamine O-acyltransferase, found in Janthinobacterium sp. (strain Marseille) (Minibacterium massiliensis).